A 191-amino-acid polypeptide reads, in one-letter code: Recombination protein RecR (191 aa).

Residues 56 to 71 form a C4-type zinc finger; it reads CQNCNFLQSNNICHFC. The Toprim domain occupies 78 to 170; it reads KQLMIFETTS…KVTKLAQGLP (93 aa).

This sequence belongs to the RecR family.

Its function is as follows. May play a role in DNA repair. It seems to be involved in an RecBC-independent recombinational process of DNA repair. It may act with RecF and RecO. This Mycoplasmopsis pulmonis (strain UAB CTIP) (Mycoplasma pulmonis) protein is Recombination protein RecR.